The primary structure comprises 151 residues: Large ribosomal subunit protein bL9 (151 aa).

This sequence belongs to the bacterial ribosomal protein bL9 family.

Its function is as follows. Binds to the 23S rRNA. The sequence is that of Large ribosomal subunit protein bL9 from Nitrosospira multiformis (strain ATCC 25196 / NCIMB 11849 / C 71).